The primary structure comprises 203 residues: Probable cytochrome c oxidase subunit 3 (203 aa).

The next 5 helical transmembrane spans lie at 30 to 50, 69 to 89, 102 to 122, 142 to 162, and 179 to 199; these read IIWL…YFVA, LAVP…MGVF, WYFI…YEYY, ITTG…VFLL, and IVVS…FATI.

This sequence belongs to the cytochrome c oxidase subunit 3 family.

It is found in the cell membrane. The enzyme catalyses 4 Fe(II)-[cytochrome c] + O2 + 8 H(+)(in) = 4 Fe(III)-[cytochrome c] + 2 H2O + 4 H(+)(out). This chain is Probable cytochrome c oxidase subunit 3 (ctaE), found in Nocardia farcinica (strain IFM 10152).